The following is a 31-amino-acid chain: Alcohol dehydrogenase 1 (31 aa).

Residue C7 coordinates Zn(2+).

This sequence belongs to the zinc-containing alcohol dehydrogenase family. Class-P subfamily. As to quaternary structure, homodimer. It depends on Zn(2+) as a cofactor.

It is found in the cytoplasm. It carries out the reaction a primary alcohol + NAD(+) = an aldehyde + NADH + H(+). The catalysed reaction is a secondary alcohol + NAD(+) = a ketone + NADH + H(+). The chain is Alcohol dehydrogenase 1 from Catharanthus roseus (Madagascar periwinkle).